Reading from the N-terminus, the 465-residue chain is Poly(A) polymerase I (465 aa).

Catalysis depends on residues Asp-80, Asp-82, and Asp-162. The segment at 430-465 is disordered; that stretch reads APPEQKGMLNELDDDPAPRRRRSRPRKRAPRREGTV. Residues 448–459 show a composition bias toward basic residues; sequence RRRRSRPRKRAP.

It belongs to the tRNA nucleotidyltransferase/poly(A) polymerase family.

It carries out the reaction RNA(n) + ATP = RNA(n)-3'-adenine ribonucleotide + diphosphate. Adds poly(A) tail to the 3' end of many RNAs, which usually targets these RNAs for decay. Plays a significant role in the global control of gene expression, through influencing the rate of transcript degradation, and in the general RNA quality control. In Salmonella typhimurium (strain LT2 / SGSC1412 / ATCC 700720), this protein is Poly(A) polymerase I.